The chain runs to 161 residues: Allophycocyanin beta chain (161 aa).

Asparagine 71 carries the post-translational modification N4-methylasparagine. Cysteine 81 lines the (2R,3E)-phycocyanobilin pocket.

It belongs to the phycobiliprotein family. As to quaternary structure, heterodimer of an alpha and a beta chain. Contains one covalently linked phycocyanobilin chromophore.

The protein resides in the plastid. It is found in the chloroplast thylakoid membrane. Its function is as follows. Light-harvesting photosynthetic bile pigment-protein from the phycobiliprotein complex. Allophycocyanin has a maximum absorption at approximately 650 nanometers. This chain is Allophycocyanin beta chain (apcB), found in Aglaothamnion neglectum (Red alga).